The sequence spans 192 residues: Histone H3-like centromeric protein CSE4 (192 aa).

The H3-like stretch occupies residues 88–190; it reads AKSHGSKYKP…MQLARRIRGQ (103 aa).

It belongs to the histone H3 family. In terms of assembly, component of centromeric nucleosomes, where DNA is wrapped around a histone octamer core. The octamer contains two molecules each of H2A, H2B, CSE4/CENPA and H4 assembled in one CSE4-H4 heterotetramer and two H2A-H2B heterodimers. Interacts with the inner kinetochore. In terms of processing, ubiquitinated. Is degraded through ubiquitin-mediated proteolysis when not protected by its association to the kinetochore.

It is found in the nucleus. The protein resides in the chromosome. Its subcellular location is the centromere. Its function is as follows. Histone H3-like nucleosomal protein that is specifically found in centromeric nucleosomes. Replaces conventional H3 in the nucleosome core of centromeric chromatin that serves as an assembly site for the inner kinetochore. Required for recruitment and assembly of kinetochore proteins, mitotic progression and chromosome segregation. May serve as an epigenetic mark that propagates centromere identity through replication and cell division. The chain is Histone H3-like centromeric protein CSE4 (CSE4) from Kluyveromyces marxianus (Yeast).